The chain runs to 421 residues: UDP-N-acetylglucosamine 1-carboxyvinyltransferase (421 aa).

22-23 lines the phosphoenolpyruvate pocket; sequence KN. Position 93 (R93) interacts with UDP-N-acetyl-alpha-D-glucosamine. C117 acts as the Proton donor in catalysis. 2-(S-cysteinyl)pyruvic acid O-phosphothioketal is present on C117. UDP-N-acetyl-alpha-D-glucosamine contacts are provided by residues 122-126, D308, and I330; that span reads RPVDL.

This sequence belongs to the EPSP synthase family. MurA subfamily.

It is found in the cytoplasm. It carries out the reaction phosphoenolpyruvate + UDP-N-acetyl-alpha-D-glucosamine = UDP-N-acetyl-3-O-(1-carboxyvinyl)-alpha-D-glucosamine + phosphate. It functions in the pathway cell wall biogenesis; peptidoglycan biosynthesis. Functionally, cell wall formation. Adds enolpyruvyl to UDP-N-acetylglucosamine. The sequence is that of UDP-N-acetylglucosamine 1-carboxyvinyltransferase from Pseudomonas putida (strain ATCC 700007 / DSM 6899 / JCM 31910 / BCRC 17059 / LMG 24140 / F1).